Consider the following 355-residue polypeptide: Protein RecA (355 aa).

67-74 (GPESSGKT) is an ATP binding site.

The protein belongs to the RecA family.

The protein resides in the cytoplasm. Its function is as follows. Can catalyze the hydrolysis of ATP in the presence of single-stranded DNA, the ATP-dependent uptake of single-stranded DNA by duplex DNA, and the ATP-dependent hybridization of homologous single-stranded DNAs. It interacts with LexA causing its activation and leading to its autocatalytic cleavage. This chain is Protein RecA, found in Shewanella halifaxensis (strain HAW-EB4).